Reading from the N-terminus, the 289-residue chain is Thioredoxin-like protein 1 (289 aa).

The region spanning 2 to 109 (VGVKPVGSDP…EEKIKQHLEN (108 aa)) is the Thioredoxin domain. Cysteine 34 and cysteine 37 form a disulfide bridge. The residue at position 113 (serine 113) is a Phosphoserine. The PITH domain occupies 115-285 (EDADIPKGYM…NDFKRVVGKK (171 aa)).

Component of the 19S regulatory cap of the 26S proteasome. Interacts with PSMD14/RPN11. Interacts with, and reduces EEF1A1.

It localises to the cytoplasm. It is found in the nucleus. Its function is as follows. Active thioredoxin with a redox potential of about -250 mV. This chain is Thioredoxin-like protein 1 (Txnl1), found in Mus musculus (Mouse).